Here is a 166-residue protein sequence, read N- to C-terminus: MGPILVLLVLLSLLEPGSANYDPCLDFDPENCTLTFAPDTSRICGVLIKCGWECRSVEITHNNKTWNNTLSTTWEPGVPEWYTVSVRGPDGSIRISNNTFIFSEMCDLAMFMSKQYSLWPPSKDNIVTFSIAYCLCACLLTALLCVCIHLLVTTRIKNANNKEKMP.

The signal sequence occupies residues 1–19 (MGPILVLLVLLSLLEPGSA). Residues 20-131 (NYDPCLDFDP…SKDNIVTFSI (112 aa)) lie on the Lumenal side of the membrane. Asn31 carries an N-linked (GlcNAc...) asparagine; by host glycan. Intrachain disulfides connect Cys32/Cys50 and Cys44/Cys106. 3 N-linked (GlcNAc...) asparagine; by host glycosylation sites follow: Asn63, Asn67, and Asn97. A helical membrane pass occupies residues 132–152 (AYCLCACLLTALLCVCIHLLV). Topologically, residues 153-166 (TTRIKNANNKEKMP) are cytoplasmic. Positions 162–166 (KEKMP) match the Di-lysine motif motif.

The protein belongs to the adenoviridae E19 family. Post-translationally, both disulfide bonds are absolutely critical for the interaction with MHC antigens. N-glycosylated; high-mannose.

The protein localises to the host endoplasmic reticulum membrane. Its function is as follows. Binds and retains class I heavy chains in the endoplasmic reticulum during the early period of virus infection, thereby impairing their transport to the cell surface. Also delays the expression of class I alleles that it cannot affect by direct retention. Binds transporters associated with antigen processing (TAP) and acts as a tapasin inhibitor, preventing class I/TAP association. In consequence, infected cells are masked for immune recognition by cytotoxic T-lymphocytes. This chain is Early E3 18.5 kDa glycoprotein, found in Human adenovirus B serotype 11 (strain Slobiski) (HAdV-11).